The chain runs to 809 residues: Sodium/hydrogen exchanger 2 (809 aa).

The next 7 helical transmembrane spans lie at 107-127, 138-158, 169-189, 209-229, 237-257, 278-298, and 308-328; these read IVPESCLLIMVGLLLGGIIFG, TDVFFLYLLPPIVLDAGYFMP, IFWYAVVGTLWNSIGIGVSLF, LFGSLISAVDPVAVLAVFENI, ILVFGESLLNDAVTVVLYNLF, FFVVGIGGVLIGIFLGFIAAF, and VIEPLFVFLYSYLSYITAEMF. Asn350 carries N-linked (GlcNAc...) asparagine glycosylation. Transmembrane regions (helical) follow at residues 361–381, 392–412, 430–450, and 459–479; these read YFMKMLSSVSETLIFIFMGVS, AFVCFTLAFCLIWRALGVFVL, FIIAYGGLRGAICFALVFLLP, and LFITAAIVVIFFTVFILGITI. 2 stretches are compositionally biased toward basic and acidic residues: residues 648-660 and 793-809; these read IRKDNSLNRERRA and RASEPGNRKSRLGSDKP. Disordered regions lie at residues 648–700 and 734–809; these read IRKD…EADA and EVDA…SDKP.

This sequence belongs to the monovalent cation:proton antiporter 1 (CPA1) transporter (TC 2.A.36) family. Interacts with CHP1 and CHP2. High levels in intestine and kidney. Strongly expressed in gastric epithelial cells, with particularly high expression levels in mucous cells.

It is found in the apical cell membrane. The catalysed reaction is Na(+)(in) + H(+)(out) = Na(+)(out) + H(+)(in). Functionally, plasma membrane Na(+)/H(+) antiporter. Mediates the electroneutral exchange of intracellular H(+) ions for extracellular Na(+). Major apical Na(+)/H(+) exchanger in the base of the colonic crypt. Controls in the colonic crypt intracellular pH (pHi) to direct colonic epithelial cell differentiation into the absorptive enterocyte lineage at the expense of the secretory lineage. The protein is Sodium/hydrogen exchanger 2 (SLC9A2) of Oryctolagus cuniculus (Rabbit).